We begin with the raw amino-acid sequence, 184 residues long: Antigen Sm21.7 (184 aa).

One can recognise an EF-hand domain in the interval 37 to 72; sequence LDMKQVNEWIALFDVDKDQKITFEEFCRGLGLKQNE. Aspartate 50, aspartate 52, aspartate 54, lysine 56, and glutamate 61 together coordinate Ca(2+).

The chain is Antigen Sm21.7 (SM21.7) from Schistosoma mansoni (Blood fluke).